An 871-amino-acid polypeptide reads, in one-letter code: MATERYNPRTSEPRWQKAWEEARLFETKNDDGRPTYYVLEMFPYPSGRIHIGHTRNYTMGDVVARYKRAKGYNVLHPMGWDAFGMPAENAAIQNKIHPKEWTYDNIATMRSQLKMMGLSLDWAREFATCDVDYYHRQQMLFIDFYKKGLVRRKTSKVNWDPVEQTVLANEQVIDGRGWRSGALVEQRELAQWFFKITDYAEDLLSAIDGLDDWPEKVRLMQRNWIGRSEGLSIRWALAEDTAPAGVGELEVYTTRPDTIFGASFLAVAPDHPLARKAAEGNPALATFIEECRHMGTSVAALETAEKKGFDTGIRVKHPFDAEWTLPVYVANFVLMEYGTGAIFGCPSGDQRDFDFANKYGLPVIPVVMPEGADAATFEITAEPYVDDGVMLNSRFLDGMSNKEAFEEVASRLEKETLDGKPVAKRKVNFRLRDWGVSRQRYWGCPIPMIHCDTCGVVPVPKEELPVKLPDDVDFDRPGNPLDRHPTWRHVKCPQCGADARRETDTMDTFVDSSWYFARFTSPHADSPVEKDVVNRWLPVDQYIGGIEHAILHLLYSRFFTRAMRDTGHLDLAEPFKGLFTQGMVVHETYRAEDGRWLTPAEVRIEGSAGERRAFEIATGKEVAIGPLEKMSKSKKNTVSPEDITESFGADTARWFMLSDSPPERDVEWTDDGAAGAHRFVQRAWRLITEAAPAIGDITPKAARDGDAAAISKPAHKALKAVGEDIERLAFNRAIARIHELVNDLQGPFAGLDKADEETRAAAREATEILIHLIAPFMPHLAEECWAAIGGKDLVAASRWPDFDPELVLDNLIVLPVQINGKKRGDLTIAREADQAAVEKAVLELDFVQKALNGAPPRKVIVVSQRIVNVVA.

The 'HIGH' region motif lies at 43–53 (PYPSGRIHIGH). Residues 629-633 (KMSKS) carry the 'KMSKS' region motif. K632 is an ATP binding site.

This sequence belongs to the class-I aminoacyl-tRNA synthetase family.

It is found in the cytoplasm. It catalyses the reaction tRNA(Leu) + L-leucine + ATP = L-leucyl-tRNA(Leu) + AMP + diphosphate. This Chelativorans sp. (strain BNC1) protein is Leucine--tRNA ligase.